The chain runs to 88 residues: Exodeoxyribonuclease 7 small subunit (88 aa).

The disordered stretch occupies residues 69–88 (DPMHPDDGEPFDPSLVSTSQ).

This sequence belongs to the XseB family. As to quaternary structure, heterooligomer composed of large and small subunits.

The protein localises to the cytoplasm. It carries out the reaction Exonucleolytic cleavage in either 5'- to 3'- or 3'- to 5'-direction to yield nucleoside 5'-phosphates.. Its function is as follows. Bidirectionally degrades single-stranded DNA into large acid-insoluble oligonucleotides, which are then degraded further into small acid-soluble oligonucleotides. This is Exodeoxyribonuclease 7 small subunit from Xylella fastidiosa (strain M23).